Here is a 336-residue protein sequence, read N- to C-terminus: Acetaldehyde dehydrogenase 1 (336 aa).

Position 32–35 (32–35 (SGVV)) interacts with NAD(+). The active-site Acyl-thioester intermediate is the C150. Residue N309 participates in NAD(+) binding.

It belongs to the acetaldehyde dehydrogenase family.

It catalyses the reaction acetaldehyde + NAD(+) + CoA = acetyl-CoA + NADH + H(+). The protein is Acetaldehyde dehydrogenase 1 (mhpF) of Mycobacterium ulcerans (strain Agy99).